A 138-amino-acid chain; its full sequence is MVDYFDYSSLLTRAREQLPEEVFKDVRFEIPSADSFVEGNRTIIKNFKDIAKFMERDPQEFAKYVMKELGTAGDMEGVRLILQGKFGWRMVNEKIQNYVNEYVLCPECGKPDTKIVKEGRIHFLKCTACGAMKPVKTL.

Belongs to the eIF-2-beta/eIF-5 family. In terms of assembly, heterotrimer composed of an alpha, a beta and a gamma chain.

Functionally, eIF-2 functions in the early steps of protein synthesis by forming a ternary complex with GTP and initiator tRNA. This is Translation initiation factor 2 subunit beta from Methanococcus maripaludis (strain DSM 14266 / JCM 13030 / NBRC 101832 / S2 / LL).